The sequence spans 131 residues: Large ribosomal subunit protein uL22 (131 aa).

The span at 1–11 (MAKGHRSKIKR) shows a compositional bias: basic residues. A disordered region spans residues 1–20 (MAKGHRSKIKRERNEVRDTR).

It belongs to the universal ribosomal protein uL22 family. In terms of assembly, part of the 50S ribosomal subunit.

Its function is as follows. This protein binds specifically to 23S rRNA; its binding is stimulated by other ribosomal proteins, e.g. L4, L17, and L20. It is important during the early stages of 50S assembly. It makes multiple contacts with different domains of the 23S rRNA in the assembled 50S subunit and ribosome. Functionally, the globular domain of the protein is located near the polypeptide exit tunnel on the outside of the subunit, while an extended beta-hairpin is found that lines the wall of the exit tunnel in the center of the 70S ribosome. This chain is Large ribosomal subunit protein uL22, found in Agathobacter rectalis (strain ATCC 33656 / DSM 3377 / JCM 17463 / KCTC 5835 / VPI 0990) (Eubacterium rectale).